Here is a 238-residue protein sequence, read N- to C-terminus: Ribonuclease PH (238 aa).

Residues Arg-86 and 124–126 contribute to the phosphate site; that span reads GTR.

Belongs to the RNase PH family. In terms of assembly, homohexameric ring arranged as a trimer of dimers.

It carries out the reaction tRNA(n+1) + phosphate = tRNA(n) + a ribonucleoside 5'-diphosphate. In terms of biological role, phosphorolytic 3'-5' exoribonuclease that plays an important role in tRNA 3'-end maturation. Removes nucleotide residues following the 3'-CCA terminus of tRNAs; can also add nucleotides to the ends of RNA molecules by using nucleoside diphosphates as substrates, but this may not be physiologically important. Probably plays a role in initiation of 16S rRNA degradation (leading to ribosome degradation) during starvation. This Acinetobacter baylyi (strain ATCC 33305 / BD413 / ADP1) protein is Ribonuclease PH.